The primary structure comprises 72 residues: MFHCPLCQHAAHARTSRYITDTTKERYHQCQNVNCSATFITYESVQRYIVKPGEVHVVRPHPLPSGQQIMWM.

In terms of biological role, cryptic version of the phage P2 OGR protein which acts as an activator of P2 late transcription. The protein is Prophage late control protein OgrK (ogrK) of Escherichia coli (strain K12).